Here is a 473-residue protein sequence, read N- to C-terminus: Fumarate hydratase class II (473 aa).

Substrate contacts are provided by residues 105–107 (SGT), 130–133 (HPND), 140–142 (SSN), and threonine 188. The active-site Proton donor/acceptor is histidine 189. Serine 319 is a catalytic residue. Residues serine 320 and 325–327 (KVN) contribute to the substrate site.

It belongs to the class-II fumarase/aspartase family. Fumarase subfamily. As to quaternary structure, homotetramer.

Its subcellular location is the cytoplasm. It catalyses the reaction (S)-malate = fumarate + H2O. It participates in carbohydrate metabolism; tricarboxylic acid cycle; (S)-malate from fumarate: step 1/1. Involved in the TCA cycle. Catalyzes the stereospecific interconversion of fumarate to L-malate. The protein is Fumarate hydratase class II of Xylella fastidiosa (strain 9a5c).